The primary structure comprises 288 residues: Glycine--tRNA ligase alpha subunit (288 aa).

The protein belongs to the class-II aminoacyl-tRNA synthetase family. As to quaternary structure, tetramer of two alpha and two beta subunits.

The protein localises to the cytoplasm. It catalyses the reaction tRNA(Gly) + glycine + ATP = glycyl-tRNA(Gly) + AMP + diphosphate. This Rickettsia rickettsii (strain Iowa) protein is Glycine--tRNA ligase alpha subunit.